The primary structure comprises 546 residues: Elongator complex protein 3 (546 aa).

The 291-residue stretch at 81–371 (RTASGIAVVA…YRVQRDIPMP (291 aa)) folds into the Radical SAM core domain. [4Fe-4S] cluster is bound by residues cysteine 98, cysteine 108, and cysteine 111. Acetyl-CoA-binding positions include lysine 163, 473–476 (ELHV), 496–498 (FGM), and tyrosine 529. The N-acetyltransferase domain occupies 395–546 (TQCRDVRTRE…EGPYMVKRLQ (152 aa)).

The protein belongs to the ELP3 family. As to quaternary structure, component of the elongator complex. It depends on [4Fe-4S] cluster as a cofactor.

The protein resides in the cytoplasm. The protein localises to the nucleus. The enzyme catalyses uridine(34) in tRNA + acetyl-CoA + S-adenosyl-L-methionine + H2O = 5-(carboxymethyl)uridine(34) in tRNA + 5'-deoxyadenosine + L-methionine + CoA + 2 H(+). It participates in tRNA modification; 5-methoxycarbonylmethyl-2-thiouridine-tRNA biosynthesis. Functionally, catalytic tRNA acetyltransferase subunit of the elongator complex which is required for multiple tRNA modifications, including mcm5U (5-methoxycarbonylmethyl uridine), mcm5s2U (5-methoxycarbonylmethyl-2-thiouridine), and ncm5U (5-carbamoylmethyl uridine). In the elongator complex, acts as a tRNA uridine(34) acetyltransferase by mediating formation of carboxymethyluridine in the wobble base at position 34 in tRNAs. The sequence is that of Elongator complex protein 3 from Gallus gallus (Chicken).